The chain runs to 256 residues: Adenylate kinase (256 aa).

45-50 (GAGKGT) is an ATP binding site. An NMP region spans residues 67–96 (ATGDLLRQQVAMGTDLGKQAKKIMDQGALV). Residues T68, R73, 94-96 (ALV), 123-126 (GFPR), and Q130 contribute to the AMP site. The LID stretch occupies residues 164 to 201 (GRLIHPGSGRSYHKIFSPPKQPMKDDITGEPLVQRSDD). Residues R165 and 174-175 (SY) contribute to the ATP site. Residues R198 and R209 each contribute to the AMP site. Q237 contributes to the ATP binding site.

It belongs to the adenylate kinase family. AK2 subfamily. As to quaternary structure, monomer.

The protein localises to the cytoplasm. Its subcellular location is the cytosol. It localises to the mitochondrion intermembrane space. The enzyme catalyses AMP + ATP = 2 ADP. Its function is as follows. Catalyzes the reversible transfer of the terminal phosphate group between ATP and AMP. Plays an important role in cellular energy homeostasis and in adenine nucleotide metabolism. Adenylate kinase activity is critical for regulation of the phosphate utilization and the AMP de novo biosynthesis pathways. In Malassezia globosa (strain ATCC MYA-4612 / CBS 7966) (Dandruff-associated fungus), this protein is Adenylate kinase.